The sequence spans 287 residues: Protease HtpX (287 aa).

Helical transmembrane passes span isoleucine 4–isoleucine 24 and glycine 33–isoleucine 53. Histidine 139 provides a ligand contact to Zn(2+). Glutamate 140 is an active-site residue. A Zn(2+)-binding site is contributed by histidine 143. 2 helical membrane-spanning segments follow: residues leucine 154–isoleucine 174 and alanine 195–phenylalanine 215. A Zn(2+)-binding site is contributed by glutamate 220.

Belongs to the peptidase M48B family. Zn(2+) is required as a cofactor.

Its subcellular location is the cell inner membrane. This chain is Protease HtpX, found in Shewanella baltica (strain OS185).